The following is a 361-amino-acid chain: MKDIFNFGSGPSMLPKIVLKKIKRDLFNWKNTNVSVMEISHRNKNFLKVIENIKNDIKFLLSVSNDYNIILLQGGARAQFSGIPMNLTNNFSDLADYINTGYWGMYAAIEAKKYCSVNIIDVIEKKDKLSILPMKNWNISKNSVYLHYCPNETINGTAIYETPKFKNKIVVADFSSTILSRPIDVNKFDIIYASSQKNIGVSGMTIMIFKKNIFLKQNKFTPSILNYEIIYKNNSLFNTPPTFNWYVSGLVLKWLIDQGGVKKINNINKIKSKLIYDIIDKSKFYKNNIYDEYRSYMNIIFYLPNKKLNNLFLKLSKINGLLFLKGHRAVGGIRASMYNSMTIKGAKKLANFMKYFEKRYG.

Residues serine 9 and arginine 42 each coordinate L-glutamate. Pyridoxal 5'-phosphate contacts are provided by residues 76-77, tryptophan 103, threonine 153, aspartate 173, and glutamine 196; that span reads AR. An N6-(pyridoxal phosphate)lysine modification is found at lysine 197. 238-239 is a pyridoxal 5'-phosphate binding site; that stretch reads NT.

It belongs to the class-V pyridoxal-phosphate-dependent aminotransferase family. SerC subfamily. As to quaternary structure, homodimer. The cofactor is pyridoxal 5'-phosphate.

It localises to the cytoplasm. The enzyme catalyses O-phospho-L-serine + 2-oxoglutarate = 3-phosphooxypyruvate + L-glutamate. It catalyses the reaction 4-(phosphooxy)-L-threonine + 2-oxoglutarate = (R)-3-hydroxy-2-oxo-4-phosphooxybutanoate + L-glutamate. Its pathway is amino-acid biosynthesis; L-serine biosynthesis; L-serine from 3-phospho-D-glycerate: step 2/3. It functions in the pathway cofactor biosynthesis; pyridoxine 5'-phosphate biosynthesis; pyridoxine 5'-phosphate from D-erythrose 4-phosphate: step 3/5. In terms of biological role, catalyzes the reversible conversion of 3-phosphohydroxypyruvate to phosphoserine and of 3-hydroxy-2-oxo-4-phosphonooxybutanoate to phosphohydroxythreonine. This is Phosphoserine aminotransferase from Wigglesworthia glossinidia brevipalpis.